The primary structure comprises 509 residues: Type II methyltransferase M.BsoBI (509 aa).

Belongs to the N(4)/N(6)-methyltransferase family. N(4) subfamily.

It catalyses the reaction a 2'-deoxycytidine in DNA + S-adenosyl-L-methionine = an N(4)-methyl-2'-deoxycytidine in DNA + S-adenosyl-L-homocysteine + H(+). In terms of biological role, an alpha subtype methylase that recognizes the double-stranded sequence 5'-CYCGRG-3', methylates C-1 on both strands, and protects the DNA from cleavage by the BsoBI endonuclease. This Geobacillus stearothermophilus (Bacillus stearothermophilus) protein is Type II methyltransferase M.BsoBI.